A 785-amino-acid polypeptide reads, in one-letter code: Probably inactive leucine-rich repeat receptor-like protein kinase At5g58150 (785 aa).

A signal peptide spans 1 to 21; sequence MRLSLWGSLLFFSFFVKHLTS. Residues 22–436 are Extracellular-facing; the sequence is LDPNTDAYHL…KVNKKNTGLK (415 aa). LRR repeat units follow at residues 64 to 88, 89 to 112, 114 to 136, 138 to 160, 161 to 184, 186 to 208, 210 to 232, 236 to 258, 259 to 283, 284 to 306, 307 to 330, 331 to 355, 357 to 377, and 379 to 405; these read SENV…TIGK, MSKL…LWSL, LLES…IGNF, SLHT…ISNL, VNLT…LVHC, SLLS…FGSA, PLLK…VLHE, TVDL…HKHN, WSSL…LSSA, HKLG…EIGK, LSAL…EISR, LSHL…SVKN, EVLD…LLEK, and AMMQ…TIQR. An N-linked (GlcNAc...) asparagine glycan is attached at Asn-119. Residues Asn-162, Asn-198, Asn-216, and Asn-258 are each glycosylated (N-linked (GlcNAc...) asparagine). Asn-314, Asn-319, and Asn-343 each carry an N-linked (GlcNAc...) asparagine glycan. N-linked (GlcNAc...) asparagine glycosylation is found at Asn-385, Asn-390, and Asn-397. The helical transmembrane segment at 437-457 threads the bilayer; the sequence is IGLGLAISMAFLLIGLLLILV. Over 458–785 the chain is Cytoplasmic; it reads ALRVRRKSRT…GLLKDISPNY (328 aa). Residues Thr-510 and Thr-518 each carry the phosphothreonine modification. The Protein kinase domain maps to 521–785; sequence FDRGTMLWEG…GLLKDISPNY (265 aa). Residues 527–535 and Lys-549 each bind ATP; that span reads LWEGKSGPT. 2 positions are modified to phosphotyrosine: Tyr-594 and Tyr-683.

The protein belongs to the protein kinase superfamily. Ser/Thr protein kinase family.

Its subcellular location is the cell membrane. In Arabidopsis thaliana (Mouse-ear cress), this protein is Probably inactive leucine-rich repeat receptor-like protein kinase At5g58150.